The following is a 147-amino-acid chain: Formiminotransferase N-terminal subdomain-containing protein (147 aa).

Positions 1 to 20 are cleaved as a signal peptide; sequence MSSSRVGLRLAACLLNVSEA.

This sequence belongs to the formiminotransferase family. In terms of tissue distribution, widely expressed with highest levels in liver and skeletal muscle, and moderate levels in kidney, bone and pancreas.

In Homo sapiens (Human), this protein is Formiminotransferase N-terminal subdomain-containing protein (FTCDNL1).